Here is a 665-residue protein sequence, read N- to C-terminus: GRB2-associated-binding protein 2 (665 aa).

Serine 2 bears the Phosphoserine mark. The PH domain occupies 8-119 (DVVCTGWLRK…WVQSICQICG (112 aa)). The interval 131 to 183 (RNLSSASHGPRSSPAEFSSSQHLLRERKSSAPSHSSQPTLFTFEPPMTSHMQP) is disordered. 10 positions are modified to phosphoserine: serine 135, serine 142, serine 143, serine 149, serine 150, serine 160, serine 165, serine 211, serine 220, and serine 261. Polar residues predominate over residues 160–170 (SAPSHSSQPTL). Threonine 262 is modified (phosphothreonine). A Phosphotyrosine modification is found at tyrosine 263. The residue at position 275 (threonine 275) is a Phosphothreonine. 2 positions are modified to phosphoserine: serine 278 and serine 282. Threonine 284 carries the phosphothreonine modification. Residue tyrosine 290 is modified to Phosphotyrosine. Threonine 328 is subject to Phosphothreonine. 2 disordered regions span residues 340–442 (TSGD…ENYV) and 491–517 (PSRGSEIQPPPVNRNLKPDRKAKPTPL). An SH3-binding motif is present at residues 348–355 (PPPRPPKP). Serine 365 is modified (phosphoserine). Phosphothreonine occurs at positions 382 and 388. Position 402 is a phosphoserine (serine 402). At threonine 405 the chain carries Phosphothreonine. A compositionally biased stretch (low complexity) spans 412-423 (GSGESASWSAES). Phosphoserine is present on residues serine 420 and serine 423. Tyrosine 441 carries the phosphotyrosine modification. The SH3-binding motif lies at 499–508 (PPPVNRNLKP). Serine 532 carries the post-translational modification Phosphoserine. Polar residues-rich tracts occupy residues 548–566 (SSSQYCRPISTQSITSTDS) and 578–600 (NPVSASPVPSGTNSPAPRKSTGS). The interval 548-631 (SSSQYCRPIS…SSVTSDEKVD (84 aa)) is disordered. At serine 612 the chain carries Phosphoserine. Phosphotyrosine is present on tyrosine 632. The span at 646–659 (TMQEWTDVRQSSEP) shows a compositional bias: polar residues. The disordered stretch occupies residues 646 to 665 (TMQEWTDVRQSSEPSKGAKL).

It belongs to the GAB family. Part of a complex composed of EEIG1, TNFRSF11A/RANK, PLCG2, GAB2, TEC and BTK; complex formation increases in the presence of TNFSF11/RANKL. Interacts with HCK. Interacts with SHC1; may mediate interaction with receptors. Interacts with SYK. Interacts with PI-3 kinase. Interacts with GRB2 (via SH3 2 domain). Interacts (phosphorylated) with PTPN11. Interacts with TNFRSF11A (via cytoplasmic domain). Interacts (phosphorylated) with 14-3-3 family proteins SFN, YWHAB, YWHAE, YWHAG, YWHAH, YWHAQ and YWHAZ; prevents interaction with GRB2 and attenuates GAB2 signaling. Phosphorylated upon EGF stimulation. Phosphorylated on tyrosine residues by HCK upon IL6 signaling. Phosphorylated on tyrosine residue(s) by the thrombopoietin receptor (TPOR), stem cell factor receptor (SCFR), and T-cell and B-cell antigen receptors, gp130, IL-2R and IL-3R. Phosphorylated upon stimulation of TNFRSF11A/RANK by TNFSF11/RANKL. Post-translationally, dephosphorylated by PTPN11.

The protein resides in the cytoplasm. Its subcellular location is the cell membrane. It is found in the membrane raft. Functionally, adapter protein which acts downstream of several membrane receptors including cytokine, antigen, hormone, cell matrix and growth factor receptors to regulate multiple signaling pathways. Regulates osteoclast differentiation mediating the TNFRSF11A/RANK signaling. In allergic response, it plays a role in mast cells activation and degranulation through PI-3-kinase regulation. Also involved in the regulation of cell proliferation and hematopoiesis. This is GRB2-associated-binding protein 2 (Gab2) from Rattus norvegicus (Rat).